A 435-amino-acid chain; its full sequence is MSKSSTCPITIKSINGRFQTTFGTIKQFNKMVELIDTNNTINLDMDSDRIEKILNYLRGYNCSLKLIAYDANKLGLDISYDGYVYINVGGRVYYVDKDFIKSKLEFFKIFFKYNNHCHPDYSGIVIDRDYRVFEKVLRHIKGKQNDNHNLSTELDYYGLNKPIHIIEPSYFNHYSMKKNMYVKIPSTIDDKNFYCKDDIETMIYLSYKYISLIVIFFEKEIPEDISGLQFYRFVGHGFGEYDKKSCGLKSISKSQNMILIHSIPYSTEHIKNNKNTKESYYHRPLELHVNKNLNIREVVFLEKMSIDKQPDNVTCIKDYFLFKKNFGSEGGLTDFVSFNLSEFLFVDYPQCAIKKMYLKSNSKISHVEIKCNNNLVLNSPVNYIGTKDIYRITFLTVSKSRLNLLIDNRTDLNFTVYFHRKCVDQLIFGYKILRL.

Residues 80–149 enclose the BTB domain; that stretch reads YDGYVYINVG…IKGKQNDNHN (70 aa).

The protein belongs to the mimivirus BTB/WD family.

This is Putative BTB/POZ domain-containing protein L275 from Acanthamoeba polyphaga mimivirus (APMV).